We begin with the raw amino-acid sequence, 144 residues long: Deoxyuridine 5'-triphosphate nucleotidohydrolase (144 aa).

Substrate is bound by residues 63-65 (RSG), Asn-76, and 80-82 (TID).

This sequence belongs to the dUTPase family. Mg(2+) serves as cofactor.

The enzyme catalyses dUTP + H2O = dUMP + diphosphate + H(+). It participates in pyrimidine metabolism; dUMP biosynthesis; dUMP from dCTP (dUTP route): step 2/2. In terms of biological role, this enzyme is involved in nucleotide metabolism: it produces dUMP, the immediate precursor of thymidine nucleotides and it decreases the intracellular concentration of dUTP so that uracil cannot be incorporated into DNA. The sequence is that of Deoxyuridine 5'-triphosphate nucleotidohydrolase from Porphyromonas gingivalis (strain ATCC 33277 / DSM 20709 / CIP 103683 / JCM 12257 / NCTC 11834 / 2561).